Consider the following 101-residue polypeptide: Ascorbate-specific PTS system EIIB component (101 aa).

The PTS EIIB type-2 domain maps to 3 to 96; the sequence is VRILAVCGNG…KLLKVIKEHF (94 aa). Cysteine 9 functions as the Phosphocysteine intermediate in the catalytic mechanism. A Phosphocysteine modification is found at cysteine 9.

Its subcellular location is the cytoplasm. It carries out the reaction N(pros)-phospho-L-histidyl-[protein] + L-ascorbate(out) = L-ascorbate 6-phosphate(in) + L-histidyl-[protein]. Its function is as follows. The phosphoenolpyruvate-dependent sugar phosphotransferase system (sugar PTS), a major carbohydrate active transport system, catalyzes the phosphorylation of incoming sugar substrates concomitantly with their translocation across the cell membrane. The enzyme II UlaABC PTS system is involved in ascorbate transport. The sequence is that of Ascorbate-specific PTS system EIIB component (ulaB) from Shigella dysenteriae serotype 1 (strain Sd197).